The sequence spans 319 residues: Probable deoxyhypusine synthase (319 aa).

K287 (nucleophile) is an active-site residue.

It belongs to the deoxyhypusine synthase family. NAD(+) is required as a cofactor.

It carries out the reaction [eIF5A protein]-L-lysine + spermidine = [eIF5A protein]-deoxyhypusine + propane-1,3-diamine. It participates in protein modification; eIF5A hypusination. Catalyzes the NAD-dependent oxidative cleavage of spermidine and the subsequent transfer of the butylamine moiety of spermidine to the epsilon-amino group of a specific lysine residue of the eIF-5A precursor protein to form the intermediate deoxyhypusine residue. In Ignicoccus hospitalis (strain KIN4/I / DSM 18386 / JCM 14125), this protein is Probable deoxyhypusine synthase.